The chain runs to 537 residues: Ribonuclease Y (537 aa).

A helical membrane pass occupies residues 4 to 24; sequence FPIIMSVFAAIIGLVIGYVSV. The segment at 112–148 is disordered; it reads ASTLDRKDDNLSNKEKALEQKEQSLSDKSKHIDAREE. Positions 227 to 287 constitute a KH domain; it reads TNSTVHLPDD…IRREIARMTM (61 aa). Residues 353 to 446 form the HD domain; that stretch reads VLRHSIEVAK…VAAADALSAA (94 aa).

Belongs to the RNase Y family.

The protein resides in the cell membrane. In terms of biological role, endoribonuclease that initiates mRNA decay. The protein is Ribonuclease Y of Streptococcus sanguinis (strain SK36).